Reading from the N-terminus, the 130-residue chain is Small ribosomal subunit protein uS8 (130 aa).

The protein belongs to the universal ribosomal protein uS8 family. In terms of assembly, part of the 30S ribosomal subunit. Contacts proteins S5 and S12.

One of the primary rRNA binding proteins, it binds directly to 16S rRNA central domain where it helps coordinate assembly of the platform of the 30S subunit. The chain is Small ribosomal subunit protein uS8 from Aeromonas salmonicida (strain A449).